A 245-amino-acid chain; its full sequence is Aliphatic sulfonates import ATP-binding protein SsuB 1 (245 aa).

The ABC transporter domain occupies 8–223 (VSITGLRKSF…ERADPDILRY (216 aa)). An ATP-binding site is contributed by 40-47 (GPSGTGKT).

Belongs to the ABC transporter superfamily. Aliphatic sulfonates importer (TC 3.A.1.17.2) family. The complex is composed of two ATP-binding proteins (SsuB), two transmembrane proteins (SsuC) and a solute-binding protein (SsuA).

It localises to the cell membrane. It catalyses the reaction ATP + H2O + aliphatic sulfonate-[sulfonate-binding protein]Side 1 = ADP + phosphate + aliphatic sulfonateSide 2 + [sulfonate-binding protein]Side 1.. Functionally, part of the ABC transporter complex SsuABC involved in aliphatic sulfonates import. Responsible for energy coupling to the transport system. The chain is Aliphatic sulfonates import ATP-binding protein SsuB 1 from Nocardia farcinica (strain IFM 10152).